Here is a 636-residue protein sequence, read N- to C-terminus: 1-deoxy-D-xylulose-5-phosphate synthase (636 aa).

Thiamine diphosphate is bound by residues His73 and 114-116 (SHA). Residue Asp146 participates in Mg(2+) binding. Thiamine diphosphate contacts are provided by residues 147–148 (GA), Asn176, Tyr287, and Glu368. Position 176 (Asn176) interacts with Mg(2+).

It belongs to the transketolase family. DXPS subfamily. Homodimer. The cofactor is Mg(2+). Thiamine diphosphate serves as cofactor.

The enzyme catalyses D-glyceraldehyde 3-phosphate + pyruvate + H(+) = 1-deoxy-D-xylulose 5-phosphate + CO2. It functions in the pathway metabolic intermediate biosynthesis; 1-deoxy-D-xylulose 5-phosphate biosynthesis; 1-deoxy-D-xylulose 5-phosphate from D-glyceraldehyde 3-phosphate and pyruvate: step 1/1. Catalyzes the acyloin condensation reaction between C atoms 2 and 3 of pyruvate and glyceraldehyde 3-phosphate to yield 1-deoxy-D-xylulose-5-phosphate (DXP). This Corynebacterium glutamicum (strain ATCC 13032 / DSM 20300 / JCM 1318 / BCRC 11384 / CCUG 27702 / LMG 3730 / NBRC 12168 / NCIMB 10025 / NRRL B-2784 / 534) protein is 1-deoxy-D-xylulose-5-phosphate synthase.